We begin with the raw amino-acid sequence, 450 residues long: Cytochrome c1 (450 aa).

Positions 1 to 21 are cleaved as a signal peptide; the sequence is MTLRNASLTAVAALTVALAGG. Positions 24-58 are enriched in low complexity; the sequence is AQDASTAPGTTAPAGSSYHTNEAAPAAADTAPAAE. The segment at 24 to 210 is disordered; that stretch reads AQDASTAPGT…AAAQEAGDSH (187 aa). Acidic residues-rich tracts occupy residues 59–77, 85–108, and 118–194; these read AADE…EVTE, PAEE…EPAA, and APAE…EDEA. Heme c contacts are provided by Cys-245, Cys-248, and His-249. A disordered region spans residues 284-305; that stretch reads PETEEDRPRVPTDHFPTVSGEG. Heme c is bound at residue Met-373. Residues 421–435 traverse the membrane as a helical segment; the sequence is SVIFLIVLAALLYLT.

As to quaternary structure, the main subunits of complex b-c1 are: cytochrome b, cytochrome c1 and the Rieske protein. Post-translationally, binds 1 heme c group covalently per subunit.

It is found in the cell membrane. Its function is as follows. Component of the ubiquinol-cytochrome c reductase complex (complex III or cytochrome b-c1 complex), which is a respiratory chain that generates an electrochemical potential coupled to ATP synthesis. c1 functions as an electron donor to cytochrome c. This is Cytochrome c1 (petC) from Paracoccus denitrificans.